The primary structure comprises 519 residues: Probable anion transporter 3, chloroplastic (519 aa).

Residues 1–76 constitute a chloroplast transit peptide; sequence MAPPGQLLPL…PPPPATSLPG (76 aa). Residues 56–72 show a composition bias toward pro residues; that stretch reads LPFAPPRRLSRPPPPAT. Positions 56–82 are disordered; the sequence is LPFAPPRRLSRPPPPATSLPGASPGGG. 12 helical membrane-spanning segments follow: residues 100 to 120, 138 to 158, 166 to 186, 188 to 208, 229 to 249, 253 to 273, 326 to 346, 362 to 382, 403 to 423, 424 to 444, 460 to 480, and 488 to 508; these read VAAM…VMSV, VVQS…GALV, VMAY…WAAA, SLWL…VALP, IAMA…PIIM, GIFG…LVWI, WALI…LSWM, AWFS…AGVV, IGFV…SPVI, ASAW…GFLV, MSNT…GFFV, and GFLI…DIFA.

Belongs to the major facilitator superfamily. Sodium/anion cotransporter (TC 2.A.1.14) family.

The protein localises to the plastid. It localises to the chloroplast membrane. In terms of biological role, probable anion transporter. This chain is Probable anion transporter 3, chloroplastic (PHT4;3), found in Oryza sativa subsp. japonica (Rice).